A 549-amino-acid chain; its full sequence is Probable protein kinase UbiB (549 aa).

Positions 123 to 501 (DFNETPLASA…QQQAHKSNYL (379 aa)) constitute a Protein kinase domain. ATP-binding positions include 129–137 (LASASISQV) and K152. Catalysis depends on D287, which acts as the Proton acceptor. Helical transmembrane passes span 498–518 (SNYL…LFNQ) and 520–540 (ATLL…IIGW).

The protein belongs to the ABC1 family. UbiB subfamily.

The protein localises to the cell inner membrane. It participates in cofactor biosynthesis; ubiquinone biosynthesis [regulation]. Is probably a protein kinase regulator of UbiI activity which is involved in aerobic coenzyme Q (ubiquinone) biosynthesis. In Shewanella oneidensis (strain ATCC 700550 / JCM 31522 / CIP 106686 / LMG 19005 / NCIMB 14063 / MR-1), this protein is Probable protein kinase UbiB.